The chain runs to 134 residues: Cytochrome b5 (134 aa).

The Cytochrome b5 heme-binding domain occupies 6–82 (TKTFTRAEVA…MKKYKIGELV (77 aa)). Heme contacts are provided by H41 and H65. Positions 86–105 (RTSVAQKSEPTWSTEQQTEE) are disordered. A compositionally biased stretch (polar residues) spans 87–105 (TSVAQKSEPTWSTEQQTEE). The chain crosses the membrane as a helical span at residues 111–131 (WLVPLVLCLVATLFYKFFFGG).

Belongs to the cytochrome b5 family.

Its subcellular location is the endoplasmic reticulum membrane. The protein resides in the microsome membrane. Cytochrome b5 is a membrane-bound hemoprotein which functions as an electron carrier for several membrane-bound oxygenases. In Drosophila melanogaster (Fruit fly), this protein is Cytochrome b5 (Cyt-b5).